We begin with the raw amino-acid sequence, 79 residues long: Putative membrane protein insertion efficiency factor (79 aa).

Belongs to the UPF0161 family.

The protein resides in the cell inner membrane. Could be involved in insertion of integral membrane proteins into the membrane. This Prochlorococcus marinus (strain SARG / CCMP1375 / SS120) protein is Putative membrane protein insertion efficiency factor.